Here is a 184-residue protein sequence, read N- to C-terminus: Probable S-adenosyl-L-methionine-binding protein PYRAB06630 (184 aa).

A TsaA-like domain is found at 9 to 140; that stretch reads YRPIGIIHSP…YVPEFDVREN (132 aa). S-adenosyl-L-methionine-binding positions include 26–28, 65–66, Arg89, and 120–123; these read PIQ, HR, and LDGT.

The protein belongs to the tRNA methyltransferase O family.

This is Probable S-adenosyl-L-methionine-binding protein PYRAB06630 from Pyrococcus abyssi (strain GE5 / Orsay).